We begin with the raw amino-acid sequence, 1287 residues long: FYVE zinc finger domain protein UPA1 (1287 aa).

The interval M1 to E298 is disordered. The span at D86–S99 shows a compositional bias: low complexity. A compositionally biased stretch (polar residues) spans W115 to A136. The PAM2 motif lies at S128–S144. Basic and acidic residues-rich tracts occupy residues R177–Q187 and K201–I211. Positions P212 to T235 are enriched in polar residues. The PAM2L 1 motif lies at A239–A253. Over residues S255–S294 the composition is skewed to polar residues. ANK repeat units lie at residues N366–E395, E400–A429, D433–V463, and G468–F497. 4 disordered regions span residues N582–P630, R643–Q697, R934–S960, and T977–E1005. Over residues S674–S695 the composition is skewed to polar residues. Residues G938–F955 show a composition bias toward acidic residues. The PAM2L 2 motif lies at E941 to S960. Residues L981–S995 are compositionally biased toward low complexity. An FYVE-type zinc finger spans residues D1055–Q1129. The Zn(2+) site is built by C1061, C1064, C1077, C1080, C1085, C1088, C1121, and C1124. The segment at C1243–H1283 adopts an RING-type; atypical zinc-finger fold.

This sequence belongs to the UPA1 PAM2 domain-binding protein family. As to quaternary structure, part of large ribonucleoprotein complexes (mRNPs) containing RNA-binding proteins RRM4 and PAB1, endosome-binding protein UPA1, core scaffold protein UPA2 and associated factor GRP1. Interacts (via PAM2 motif) with PAB1 (via PABC domain). Interacts (via PAM2L motifs) with RRM4.

The protein localises to the cytoplasm. The protein resides in the cytoskeleton. It localises to the endosome. FYVE zinc finger domain protein that functions in endosomal targeting and transport of mRNAs, as well as associated ribosomes. The endosomal mRNA transport regulates polarity of the infectious hyphae by transporting a broad spectrum of cargo mRNAs from the nucleus to cell poles. Involved in chitinase CTS1 secretion. Dispensable for general endosomal functions but crucial for endosomal recruitment of RRM4. In Mycosarcoma maydis (Corn smut fungus), this protein is FYVE zinc finger domain protein UPA1.